A 212-amino-acid chain; its full sequence is tRNA (guanine-N(7)-)-methyltransferase (212 aa).

Residues E44, D69, D96, and D118 each coordinate S-adenosyl-L-methionine. D118 is a catalytic residue. Position 122 (K122) interacts with substrate. The tract at residues 124–129 (RHEKRR) is interaction with RNA. Residues D154 and 191–194 (TEYE) contribute to the substrate site.

It belongs to the class I-like SAM-binding methyltransferase superfamily. TrmB family.

The enzyme catalyses guanosine(46) in tRNA + S-adenosyl-L-methionine = N(7)-methylguanosine(46) in tRNA + S-adenosyl-L-homocysteine. The protein operates within tRNA modification; N(7)-methylguanine-tRNA biosynthesis. Catalyzes the formation of N(7)-methylguanine at position 46 (m7G46) in tRNA. The polypeptide is tRNA (guanine-N(7)-)-methyltransferase (Streptococcus gordonii (strain Challis / ATCC 35105 / BCRC 15272 / CH1 / DL1 / V288)).